The following is a 144-amino-acid chain: Large ribosomal subunit protein uL11 (144 aa).

The protein belongs to the universal ribosomal protein uL11 family. Part of the ribosomal stalk of the 50S ribosomal subunit. Interacts with L10 and the large rRNA to form the base of the stalk. L10 forms an elongated spine to which L12 dimers bind in a sequential fashion forming a multimeric L10(L12)X complex. Post-translationally, one or more lysine residues are methylated.

Forms part of the ribosomal stalk which helps the ribosome interact with GTP-bound translation factors. The sequence is that of Large ribosomal subunit protein uL11 from Gluconobacter oxydans (strain 621H) (Gluconobacter suboxydans).